The following is a 1893-amino-acid chain: Transcription initiation factor TFIID subunit 1 (1893 aa).

One can recognise a Protein kinase 1 domain in the interval 1-435 (MGPGCDLLLR…VTQLHWEDDI (435 aa)). Ser137 carries the phosphoserine; by autocatalysis modification. Disordered regions lie at residues 155 to 184 (LMPP…NGEG) and 197 to 224 (ASEK…AESE). Residues 156-165 (MPPPPPPPGP) are compositionally biased toward pro residues. Residues 197–208 (ASEKVDFSSSSD) show a composition bias toward low complexity. The residue at position 328 (Ser328) is a Phosphoserine; by autocatalysis. Residues 534–557 (IPDEKEEATSNSPSKESKKESSLK) form a disordered region. Residues 538-997 (KEEATSNSPS…KIPNKPTQQK (460 aa)) form a histone acetyltransferase (HAT) region. Position 565 is an N6-acetyllysine (Lys565). Glycyl lysine isopeptide (Lys-Gly) (interchain with G-Cter in SUMO2) cross-links involve residues Lys570 and Lys583. Disordered regions lie at residues 990–1009 (PNKP…KKTV), 1128–1148 (MLQN…QERK), 1158–1177 (GSAA…VTSL), and 1254–1278 (RLKR…MKER). Basic and acidic residues-rich tracts occupy residues 995–1004 (QQKDDKEPQP) and 1139–1148 (SREREEQERK). Residues 1216 to 1294 (VRIRTTKDEE…CGACGAIGHM (79 aa)) constitute a DNA-binding region (HMG box; involved in promoter binding). The segment covering 1254–1270 (RLKRNQEKEKLKGPPEK) has biased composition (basic and acidic residues). Residues 1363–1650 (VLKFPKQQLP…TAKEAALEEA (288 aa)) form an interaction with ASF1A and ASF1B region. Residues 1372 to 1379 (PPKKKRRV) carry the Nuclear localization signal motif. Bromo domains lie at 1397 to 1505 (RRRT…LKEK) and 1519 to 1628 (LLDD…LTEY). Residues 1446–1893 (MDLQTLRENV…AGDSDLDSDE (448 aa)) enclose the Protein kinase 2 domain. Positions 1651–1676 (ELESLDPMTPGPYTPQPPDLYDTNTS) are disordered. Pro residues predominate over residues 1659–1668 (TPGPYTPQPP). Residues Ser1690, Ser1693, Ala1718, Glu1721, and Gly1723 each carry the phosphoserine modification. The tract at residues 1696-1893 (DIPSATPEKQ…AGDSDLDSDE (198 aa)) is disordered. Composition is skewed to acidic residues over residues 1709 to 1723 (EGED…EEEG) and 1741 to 1756 (EGED…EEGD). A phosphoserine mark is found at Ser1799, Ser1802, and Ser1820. The segment covering 1830 to 1840 (KSNTQDTSFSS) has biased composition (polar residues). Acidic residues predominate over residues 1846–1857 (VSEEEEDEEEEE). Ser1847 is subject to Phosphoserine. Over residues 1860–1869 (SGPSVLSQVH) the composition is skewed to polar residues.

It belongs to the TAF1 family. As to quaternary structure, component of the TFIID basal transcription factor complex, composed of TATA-box-binding protein TBP, and a number of TBP-associated factors (TAFs), including TAF1, TAF2, TAF3, TAF4, TAF5, TAF6, TAF7, TAF8, TAF9, TAF10, TAF11, TAF12 and TAF13. Interacts with TAF7; the interaction is direct. TAF1, when part of the TFIID complex, interacts with C-terminus of TP53. Part of a TFIID-containing RNA polymerase II pre-initiation complex that is composed of TBP and at least GTF2A1, GTF2A2, GTF2E1, GTF2E2, GTF2F1, GTF2H2, GTF2H3, GTF2H4, GTF2H5, GTF2B, TCEA1, ERCC2, ERCC3, TAF1, TAF2, TAF3, TAF4, TAF5, TAF6, TAF7, TAF8, TAF9, TAF10, TAF11, TAF12 and TAF13. Component of some MLL1/MLL complex, at least composed of the core components KMT2A/MLL1, ASH2L, HCFC1/HCF1, WDR5 and RBBP5, as well as the facultative components BACC1, CHD8, E2F6, HSP70, INO80C, KANSL1, LAS1L, MAX, MCRS1, MGA, KAT8/MOF, PELP1, PHF20, PRP31, RING2, RUVB1/TIP49A, RUVB2/TIP49B, SENP3, TAF1, TAF4, TAF6, TAF7, TAF9 and TEX10. RB1 interacts with the N-terminal domain of TAF1. Interacts with ASF1A and ASF1B. Interacts (via bromo domains) with acetylated lysine residues on the N-terminus of histone H1.4, H2A, H2B, H3 and H4 (in vitro). (Microbial infection) Interacts with SV40 Large T antigen. In terms of assembly, (Microbial infection) Interacts with herpes simplex virus 1 ICP4. Mg(2+) serves as cofactor. In terms of processing, phosphorylated by casein kinase II in vitro.

Its subcellular location is the nucleus. The catalysed reaction is L-seryl-[protein] + ATP = O-phospho-L-seryl-[protein] + ADP + H(+). It carries out the reaction L-threonyl-[protein] + ATP = O-phospho-L-threonyl-[protein] + ADP + H(+). The enzyme catalyses L-lysyl-[protein] + acetyl-CoA = N(6)-acetyl-L-lysyl-[protein] + CoA + H(+). Autophosphorylates on Ser residues. Inhibited by retinoblastoma tumor suppressor protein, RB1. Binding to TAF7 or CIITA inhibits the histone acetyltransferase activity. In terms of biological role, the TFIID basal transcription factor complex plays a major role in the initiation of RNA polymerase II (Pol II)-dependent transcription. TFIID recognizes and binds promoters with or without a TATA box via its subunit TBP, a TATA-box-binding protein, and promotes assembly of the pre-initiation complex (PIC). The TFIID complex consists of TBP and TBP-associated factors (TAFs), including TAF1, TAF2, TAF3, TAF4, TAF5, TAF6, TAF7, TAF8, TAF9, TAF10, TAF11, TAF12 and TAF13. TAF1 is the largest component and core scaffold of the TFIID complex, involved in nucleating complex assembly. TAF1 forms a promoter DNA binding subcomplex of TFIID, together with TAF7 and TAF2. Contains novel N- and C-terminal Ser/Thr kinase domains which can autophosphorylate or transphosphorylate other transcription factors. Phosphorylates TP53 on 'Thr-55' which leads to MDM2-mediated degradation of TP53. Phosphorylates GTF2A1 and GTF2F1 on Ser residues. Possesses DNA-binding activity. Essential for progression of the G1 phase of the cell cycle. Exhibits histone acetyltransferase activity towards histones H3 and H4. The sequence is that of Transcription initiation factor TFIID subunit 1 from Homo sapiens (Human).